The primary structure comprises 333 residues: Ketol-acid reductoisomerase (NADP(+)) (333 aa).

The KARI N-terminal Rossmann domain maps to 1–181 (MKVYYDQDAD…GGARSGVIET (181 aa)). NADP(+) is bound by residues 24–27 (YGSQ), R47, and 82–85 (DEVQ). H107 is an active-site residue. An NADP(+)-binding site is contributed by G133. Positions 182–327 (TFREETETDL…KELRSMMPWL (146 aa)) constitute a KARI C-terminal knotted domain. Mg(2+) is bound by residues D190, E194, E226, and E230. Residue S251 participates in substrate binding.

The protein belongs to the ketol-acid reductoisomerase family. It depends on Mg(2+) as a cofactor.

It catalyses the reaction (2R)-2,3-dihydroxy-3-methylbutanoate + NADP(+) = (2S)-2-acetolactate + NADPH + H(+). The catalysed reaction is (2R,3R)-2,3-dihydroxy-3-methylpentanoate + NADP(+) = (S)-2-ethyl-2-hydroxy-3-oxobutanoate + NADPH + H(+). The protein operates within amino-acid biosynthesis; L-isoleucine biosynthesis; L-isoleucine from 2-oxobutanoate: step 2/4. It functions in the pathway amino-acid biosynthesis; L-valine biosynthesis; L-valine from pyruvate: step 2/4. Its function is as follows. Involved in the biosynthesis of branched-chain amino acids (BCAA). Catalyzes an alkyl-migration followed by a ketol-acid reduction of (S)-2-acetolactate (S2AL) to yield (R)-2,3-dihydroxy-isovalerate. In the isomerase reaction, S2AL is rearranged via a Mg-dependent methyl migration to produce 3-hydroxy-3-methyl-2-ketobutyrate (HMKB). In the reductase reaction, this 2-ketoacid undergoes a metal-dependent reduction by NADPH to yield (R)-2,3-dihydroxy-isovalerate. The protein is Ketol-acid reductoisomerase (NADP(+)) of Desulfovibrio desulfuricans (strain ATCC 27774 / DSM 6949 / MB).